A 388-amino-acid polypeptide reads, in one-letter code: Succinate--CoA ligase [ADP-forming] subunit beta (388 aa).

The 236-residue stretch at Lys-9 to His-244 folds into the ATP-grasp domain. ATP is bound by residues Lys-46, Gly-53–Gly-55, Glu-99, Thr-102, and Glu-107. The Mg(2+) site is built by Asn-199 and Asp-213. Residues Asn-264 and Gly-321–Val-323 each bind substrate.

The protein belongs to the succinate/malate CoA ligase beta subunit family. As to quaternary structure, heterotetramer of two alpha and two beta subunits. Mg(2+) is required as a cofactor.

The enzyme catalyses succinate + ATP + CoA = succinyl-CoA + ADP + phosphate. The catalysed reaction is GTP + succinate + CoA = succinyl-CoA + GDP + phosphate. Its pathway is carbohydrate metabolism; tricarboxylic acid cycle; succinate from succinyl-CoA (ligase route): step 1/1. Its function is as follows. Succinyl-CoA synthetase functions in the citric acid cycle (TCA), coupling the hydrolysis of succinyl-CoA to the synthesis of either ATP or GTP and thus represents the only step of substrate-level phosphorylation in the TCA. The beta subunit provides nucleotide specificity of the enzyme and binds the substrate succinate, while the binding sites for coenzyme A and phosphate are found in the alpha subunit. This is Succinate--CoA ligase [ADP-forming] subunit beta from Shewanella sp. (strain MR-4).